The primary structure comprises 514 residues: 2,3-bisphosphoglycerate-independent phosphoglycerate mutase (514 aa).

2 residues coordinate Mn(2+): Asp14 and Ser64. Ser64 serves as the catalytic Phosphoserine intermediate. Substrate contacts are provided by residues His125, Arg155–Asp156, Arg187, Arg193, Arg263–Arg266, and Lys336. Mn(2+) is bound by residues Asp403, His407, Asp444, His445, and His463.

This sequence belongs to the BPG-independent phosphoglycerate mutase family. As to quaternary structure, monomer. Mn(2+) is required as a cofactor.

The catalysed reaction is (2R)-2-phosphoglycerate = (2R)-3-phosphoglycerate. The protein operates within carbohydrate degradation; glycolysis; pyruvate from D-glyceraldehyde 3-phosphate: step 3/5. Its function is as follows. Catalyzes the interconversion of 2-phosphoglycerate and 3-phosphoglycerate. The chain is 2,3-bisphosphoglycerate-independent phosphoglycerate mutase from Shewanella sediminis (strain HAW-EB3).